The chain runs to 278 residues: Complement component 1 Q subcomponent-binding protein, mitochondrial (278 aa).

Residues 1–70 (MFQLLRCVPR…PCACGCGCSG (70 aa)) constitute a mitochondrion transit peptide. The C1q binding stretch occupies residues 73 to 90 (TEGDKAFVDFLSDEIKEE). Residue Ser84 is modified to Phosphoserine. N6-acetyllysine is present on residues Lys88 and Lys91. A disordered region spans residues 136–164 (IPPAFGGEEEEPSQGQKAEEQEPELTSTP). The interaction with MAVS stretch occupies residues 166–209 (FVVEVTKDGSSKALVLDCHYPEDEIGQEDDQSDIFSIKEVSFQA). Phosphotyrosine is present on Tyr185. Phosphoserine occurs at positions 197 and 201. Thr210 bears the Phosphothreonine mark.

This sequence belongs to the MAM33 family. Homotrimer; three monomers form a donut-shaped structure with an unusually asymmetric charge distribution on the surface. Interacts with CDK13, HRK, VTN, NFYB, ADRA1B, FOXC1, DDX21, DDX50, NCL, SRSF1 and SRSF9. Interacts with CD93; the association may represent a cell surface C1q receptor. Interacts with KRT1; the association represents a cell surface kininogen receptor. Interacts with CD209; the interaction is indicative for a C1q:C1QBP:CD209 signaling complex. Interacts with FBL and RRP1; the respective interactions with C1QBP are competitive. Probably associates with the mitoribosome. Interacts with MAVS; the interaction occurs upon viral transfection. Interacts with PPIF. Interacts with U2AF1L4. Interacts with PLEKHN1. Interacts with VGF-derived peptide TLQP-21. Interacts with MRE11 and RAD50; forming the MRC (MRE11-RAD50-C1QBP) complex that inhibits the activity of MRE11.

The protein resides in the mitochondrion matrix. It is found in the nucleus. It localises to the cell membrane. Its subcellular location is the secreted. The protein localises to the cytoplasm. The protein resides in the nucleolus. Its function is as follows. Multifunctional and multicompartmental protein involved in inflammation and infection processes, ribosome biogenesis, protein synthesis in mitochondria, regulation of apoptosis, transcriptional regulation and pre-mRNA splicing. At the cell surface is thought to act as an endothelial receptor for plasma proteins of the complement and kallikrein-kinin cascades. Putative receptor for C1q; specifically binds to the globular 'heads' of C1q thus inhibiting C1; may perform the receptor function through a complex with C1qR/CD93. In complex with cytokeratin-1/KRT1 is a high affinity receptor for kininogen-1/HMWK. Can also bind other plasma proteins, such as coagulation factor XII leading to its autoactivation. May function to bind initially fluid kininogen-1 to the cell membrane. The secreted form may enhance both extrinsic and intrinsic coagulation pathways. It is postulated that the cell surface form requires docking with transmembrane proteins for downstream signaling which might be specific for a cell-type or response. By acting as C1q receptor is involved in chemotaxis of immature dendritic cells and neutrophils and is proposed to signal through CD209/DC-SIGN on immature dendritic cells, through integrin alpha-4/beta-1 during trophoblast invasion of the decidua, and through integrin beta-1 during endothelial cell adhesion and spreading. Signaling involved in inhibition of innate immune response is implicating the PI3K-AKT/PKB pathway. Required for protein synthesis in mitochondria. In mitochondrial translation may be involved in formation of functional 55S mitoribosomes; the function seems to involve its RNA-binding activity. Acts as a RNA modification reader, which specifically recognizes and binds mitochondrial RNAs modified by C5-methylcytosine (m5C) in response to stress, and promotes recruitment of the mitochondrial degradosome complex, leading to their degradation. May be involved in the nucleolar ribosome maturation process; the function may involve the exchange of FBL for RRP1 in the association with pre-ribosome particles. Involved in regulation of RNA splicing by inhibiting the RNA-binding capacity of SRSF1 and its phosphorylation. Is required for the nuclear translocation of splicing factor U2AF1L4. Involved in regulation of CDKN2A- and HRK-mediated apoptosis. Stabilizes mitochondrial CDKN2A isoform smARF. May be involved in regulation of FOXC1 transcriptional activity and NFY/CCAAT-binding factor complex-mediated transcription. May play a role in antibacterial defense as it can bind to cell surface hyaluronan and inhibit Streptococcus pneumoniae hyaluronate lyase. May be involved in modulation of the immune response; ligation by HCV core protein is resulting in suppression of interleukin-12 production in monocyte-derived dendritic cells. Involved in regulation of antiviral response by inhibiting RIGI- and IFIH1-mediated signaling pathways probably involving its association with MAVS after viral infection. Acts as a regulator of DNA repair via homologous recombination by inhibiting the activity of MRE11: interacts with unphosphorylated MRE11 and RAD50 in absence of DNA damage, preventing formation and activity of the MRN complex. Following DNA damage, dissociates from phosphorylated MRE11, allowing formation of the MRN complex. The sequence is that of Complement component 1 Q subcomponent-binding protein, mitochondrial (C1QBP) from Bos taurus (Bovine).